The following is a 105-amino-acid chain: Dynein axonemal light chain 4 (105 aa).

The protein belongs to the dynein light chain family. In terms of assembly, consists of at least two heavy chains and a number of intermediate and light chains.

It localises to the cytoplasm. The protein localises to the cytoskeleton. The protein resides in the cilium axoneme. Its function is as follows. Force generating protein of respiratory cilia. Produces force towards the minus ends of microtubules. Dynein has ATPase activity. The protein is Dynein axonemal light chain 4 (Dnal4) of Mus musculus (Mouse).